The primary structure comprises 165 residues: MSGAMRRIGEYLGLLEDTGRYDDEYGDYAGDYETQETAPVATRSSKRESRPAPVSDLSERRRPASGPTGVVAELSRITTLHPSTYNEARTVGENFRDGTPVIMNLSEMDDADAKRLVDFAAGLVFATRGTIERITNKVFLLSPPNVSVAAEDKQRIAEGGFFNQS.

Positions 23-75 (DEYGDYAGDYETQETAPVATRSSKRESRPAPVSDLSERRRPASGPTGVVAELS) are disordered.

This sequence belongs to the SepF family. Homodimer. Interacts with FtsZ.

The protein localises to the cytoplasm. Cell division protein that is part of the divisome complex and is recruited early to the Z-ring. Probably stimulates Z-ring formation, perhaps through the cross-linking of FtsZ protofilaments. Its function overlaps with FtsA. This is Cell division protein SepF from Nocardioides sp. (strain ATCC BAA-499 / JS614).